A 128-amino-acid polypeptide reads, in one-letter code: LIM domain-containing protein 2 (128 aa).

Position 1 is an N-acetylmethionine (methionine 1). A disordered region spans residues methionine 1–valine 25. Positions glutamate 39 to serine 99 constitute an LIM zinc-binding domain. Residues cysteine 41, cysteine 44, histidine 62, cysteine 65, cysteine 68, cysteine 71, cysteine 89, and histidine 92 each coordinate Zn(2+).

Interacts with ILK.

The protein resides in the cytoplasm. Its subcellular location is the nucleus. Its function is as follows. Acts as an activator of the protein-kinase ILK, thereby regulating cell motility. The polypeptide is LIM domain-containing protein 2 (Mus musculus (Mouse)).